A 609-amino-acid chain; its full sequence is Phosphoprotein 85 (609 aa).

The disordered stretch occupies residues 461-609; sequence QNEGRASSRA…RSTETNDERL (149 aa). Residues 465–478 show a composition bias toward low complexity; that stretch reads RASSRASSSHSTST. Residues 484-495 show a composition bias toward polar residues; that stretch reads PQSGRSTPTSIL. 2 stretches are compositionally biased toward low complexity: residues 503–513 and 552–563; these read SNSRSSSVSFS and SPQSASSNNSMS. Residues 600–609 are compositionally biased toward basic and acidic residues; it reads RSTETNDERL.

Belongs to the herpesviridae pp85 family. In terms of processing, phosphorylated.

The protein localises to the virion tegument. It is found in the host cytoplasm. The sequence is that of Phosphoprotein 85 (U14) from Homo sapiens (Human).